The following is a 945-amino-acid chain: Collagen-like protein 1 (945 aa).

2 disordered regions span residues 80–226 (SLKG…SPDL) and 257–441 (GEKG…DKGE). Collagen-like domains lie at 83-142 (GDPG…QGDK) and 146-205 (GDVG…KGDK). Composition is skewed to basic and acidic residues over residues 109–145 (QGTKGEQGDQGEQGDKGDKGDKGDVGAKGDQGDKGDQ) and 168–208 (DQGD…KGDK). Residue Asn-211 is glycosylated (N-linked (GlcNAc...) asparagine; by host). 5 consecutive Collagen-like domains span residues 257–376 (GEKG…KGDK), 383–442 (GDKG…KGEN), 488–547 (GEKG…VGDK), 554–613 (GDKG…KGDV), and 635–694 (GDKG…VGAS). N-linked (GlcNAc...) asparagine; by host glycosylation is present at Asn-442. Over residues 488–687 (GEKGDKGDTG…DKGDKGDKGD (200 aa)) the composition is skewed to basic and acidic residues. Positions 488–712 (GEKGDKGDTG…SPTTGENGDS (225 aa)) are disordered. Over residues 703–712 (SPTTGENGDS) the composition is skewed to polar residues. N-linked (GlcNAc...) asparagine; by host glycosylation is present at Asn-716. Positions 733 to 768 (TNIKGDKGDKGDKGDKGDKGDTGDVGLKGDTGTPGS) are disordered. The span at 736-754 (KGDKGDKGDKGDKGDKGDT) shows a compositional bias: basic and acidic residues. The segment covering 756-765 (DVGLKGDTGT) has biased composition (low complexity).

Post-translationally, may be hydroxylated on lysine by the viral-encoded procollagen-lysine,2-oxoglutarate 5-dioxygenase.

It localises to the virion. Its function is as follows. May participate in the formation of a layer of cross-linked glycosylated fibrils at the viral surface thus giving it a hairy-like appearance. The sequence is that of Collagen-like protein 1 from Acanthamoeba polyphaga mimivirus (APMV).